The sequence spans 1139 residues: Phospholipid-transporting ATPase tat-1 (1139 aa).

A run of 3 helical transmembrane segments spans residues 78–98, 276–296, and 318–338; these read YTTA…EIFE, IIFL…GSEI, and SFLW…PISL. The active-site 4-aspartylphosphate intermediate is the aspartate 388. 6 helical membrane-spanning segments follow: residues 831 to 851, 855 to 875, 901 to 921, 935 to 955, 972 to 992, and 1013 to 1033; these read ICLY…GQTI, WTIG…LGLF, IGNF…LFFL, GLTG…VATV, VACI…SLVF, and YTFW…DLVI.

This sequence belongs to the cation transport ATPase (P-type) (TC 3.A.3) family. Type IV subfamily.

Its subcellular location is the cell membrane. The protein resides in the early endosome membrane. The protein localises to the recycling endosome membrane. It catalyses the reaction ATP + H2O + phospholipidSide 1 = ADP + phosphate + phospholipidSide 2.. The enzyme catalyses a 1,2-diacyl-sn-glycero-3-phospho-L-serine(out) + ATP + H2O = a 1,2-diacyl-sn-glycero-3-phospho-L-serine(in) + ADP + phosphate + H(+). In terms of biological role, transports phosphatidylserine from the outer to the inner leaflet of the plasma membrane, thereby maintaining the enrichment of this phospholipid in the inner leaflet. Ectopic exposure of phosphatidylserine on the cell surface may result in removal of living cells by neighboring phagocytes. Regulation of the phosphatidylserine distribution in plasma membranes is likely to help in the maintenance and control of the membrane surface charge. Plays a role in the formation of the tubular membrane structure and in membrane trafficking and is specifically involved in the recycling and degradation of endocytic cargo, likely with its chaperone protein chat-1. The protein is Phospholipid-transporting ATPase tat-1 (tat-1) of Caenorhabditis elegans.